The chain runs to 390 residues: ATP-sensitive inward rectifier potassium channel 11 (390 aa).

Residues 1 to 65 (MLSRKGIIPE…LQDVFTTLVD (65 aa)) lie on the Cytoplasmic side of the membrane. ATP is bound by residues Asn48 and Arg50. The chain crosses the membrane as a helical span at residues 66–92 (LKWPHTLLIFTMSFLCSWLLFAMVWWL). Over 93–116 (IAFAHGDLAPGEGTNVPCVTSIHS) the chain is Extracellular. A disulfide bond links Cys110 and Cys142. Positions 117–133 (FSSAFLFSIEVQVTIGF) form an intramembrane region, discontinuously helical; Pore-forming. K(+)-binding residues include Thr130 and Phe133. Residues 130-135 (TIGFGG) carry the Selectivity filter motif. At 134-142 (GGRMVTEEC) the chain is on the extracellular side. Residues 143–171 (PLAILILIVQNIVGLMINAIMLGCIFMKT) form a helical membrane-spanning segment. Residues 172-390 (AQAHRRAETL…KFSISPDSLS (219 aa)) lie on the Cytoplasmic side of the membrane. Arg176 is an a 1,2-diacyl-sn-glycero-3-phospho-(1D-myo-inositol-4,5-bisphosphate) binding site. Tyr330 is a binding site for ATP. A Phosphothreonine; by MAPK1 modification is found at Thr341. The residue at position 385 (Ser385) is a Phosphoserine; by MAPK1.

The protein belongs to the inward rectifier-type potassium channel (TC 1.A.2.1) family. KCNJ11 subfamily. As to quaternary structure, homotetramer; the homotetramer binds four ATP molecules (one ATP per subunit). Forms an heterooctamer with ABCC8/SUR1; one KCNJ11 homotetramer interacts with four ABCC8/SUR1 molecules. Interacts with ABCC9/SUR2. Phosphorylation by MAPK1 results in changes in channel gating that destabilize the closed states and reduce the ATP sensitivity.

It is found in the membrane. The enzyme catalyses K(+)(in) = K(+)(out). Its activity is regulated as follows. KATP channels are regulated by cytoplasmic ATP/ADP ratios; ATP inhibits the channel by closing the pore, while ADP activates the channel. Activated by phosphatidylinositol 4,5-biphosphate (PtdIns(4,5)P2). Functionally, inward rectifier potassium channel that forms the pore of ATP-sensitive potassium channels (KATP), regulating potassium permeability as a function of cytoplasmic ATP and ADP concentrations in many different cells. Inward rectifier potassium channels are characterized by a greater tendency to allow potassium to flow into the cell rather than out of it. Their voltage dependence is regulated by the concentration of extracellular potassium; as external potassium is raised, the voltage range of the channel opening shifts to more positive voltages. The inward rectification is mainly due to the blockage of outward current by internal magnesium. Can be blocked by extracellular barium. In pancreatic cells, it forms KATP channels with ABCC8/SUR1. Can form cardiac and smooth muscle-type KATP channels with ABCC9. In Mus musculus (Mouse), this protein is ATP-sensitive inward rectifier potassium channel 11 (Kcnj11).